Here is a 469-residue protein sequence, read N- to C-terminus: Glutamate--tRNA ligase (469 aa).

Residues 9–19 carry the 'HIGH' region motif; that stretch reads PSPTGFLHVGG. The Zn(2+) site is built by Cys-98, Cys-100, Cys-125, and Asp-127. Residues 236–240 carry the 'KMSKS' region motif; it reads KLSKR. Lys-239 is a binding site for ATP.

This sequence belongs to the class-I aminoacyl-tRNA synthetase family. Glutamate--tRNA ligase type 1 subfamily. In terms of assembly, monomer. Zn(2+) serves as cofactor.

It is found in the cytoplasm. The enzyme catalyses tRNA(Glu) + L-glutamate + ATP = L-glutamyl-tRNA(Glu) + AMP + diphosphate. In terms of biological role, catalyzes the attachment of glutamate to tRNA(Glu) in a two-step reaction: glutamate is first activated by ATP to form Glu-AMP and then transferred to the acceptor end of tRNA(Glu). The polypeptide is Glutamate--tRNA ligase (Shewanella sp. (strain MR-4)).